The following is an 835-amino-acid chain: MNQIEQKWQYIWQEEKAFEVSNASSKPKYYVLEMLPYPSGKIHVGHVRNYSIGDVIARFMTMQGFNVLHPMGWDAFGLPAEHAAIKNNSHPKKWTYSNIKNMKKQLKSMGFSYDWSREINSCDPEYYKHEQKFFLELYERNLAYQKESFVNWDPVDNTVLANEQVVDGRGWRSGAIVVKRYLKQWFLKITDYAEELLNEIQNLKEWPEAVRSMQEKWIGKSIGANFHFKIKDNEETTIEVFSTKPETIFGASFIGIAFNHPIIERLVSKTPEILAFITQCSHITRSSELEKTEREGVFTGLFVIHPFDSNIVLPVIITNFVLMDYGTGAIFGCPAHDECDHELAVKMNLSIKQVIKADMDVQKTAYTEDGILINSDFLNGLTSHEAKQEVIGEFEKLGIGKRSVNYRLKDWGISRQRFWGCPIPMIHCEICGIVPVPYKDLPVILPDDVNFDGHGNPLDHHPSWKHVNCPKCDKPAVRETDTFDTFFESSWYFMRYCNSNATEMTDKKACDYWLPVDKYIGGIEHAVMHLLYARFFTKVMNEQNYVSVREPFKGLFTQGMVLHATYKDEHNNWLYPEEVVKKGNEFFHKESNNRVVQGRIEKMSKSKKNLIDLETMQEQYGADAIRLFVLSDSPPEKDLEWSASGIEGCSRFINKLEYMFKAIDSLKDDVNSEVNKELNRLVHFTIKHVAEDIKHFALNRAIARMRELSNAISAEISKDKIDVKTVRHGFNVLVQLLNPFIPHITEEIWQKLGNKERLYNLSFPAFDESMLELDTYIMAVQVNGKLRDTYEFKTSVSEDEIKQVTVSLPKVQKFLEGQEPKKIILVPRKIVNILV.

Residues 36–46 (PYPSGKIHVGH) carry the 'HIGH' region motif. The 'KMSKS' region signature appears at 602 to 606 (KMSKS). Lys-605 is an ATP binding site.

The protein belongs to the class-I aminoacyl-tRNA synthetase family.

It is found in the cytoplasm. It catalyses the reaction tRNA(Leu) + L-leucine + ATP = L-leucyl-tRNA(Leu) + AMP + diphosphate. This Rickettsia africae (strain ESF-5) protein is Leucine--tRNA ligase.